The sequence spans 961 residues: Phosphofurin acidic cluster sorting protein 1 (961 aa).

The segment covering 1–19 (MAERGGAGGGPGGAGGGSS) has biased composition (gly residues). Disordered regions lie at residues 1–70 (MAER…SSST) and 76–95 (VAVASGSAPPGGPGPGRTPA). Ala2 is modified (N-acetylalanine). Residues 20–30 (QRGSGVAQSPQ) show a composition bias toward low complexity. Ser28 bears the Phosphoserine mark. Pro residues predominate over residues 31–46 (QQPPQQPSQPQQPTPP). Phosphothreonine is present on Thr44. A compositionally biased stretch (low complexity) spans 51 to 70 (ATSSSSSTSAAAASSSSSST). Tyr249 carries the post-translational modification Phosphotyrosine. Residues 260-271 (GIKSKLSDRSPD) show a composition bias toward basic and acidic residues. Disordered regions lie at residues 260–297 (GIKSKLSDRSPDIDNYSEEEEESFSSEQEGSDDPLHGQ) and 375–426 (NPSD…GKDT). Over residues 274–291 (NYSEEEEESFSSEQEGSD) the composition is skewed to acidic residues. Residues 351–375 (HVSREQIREVEEDLDELYDSLEMYN) adopt a coiled-coil conformation. A phosphoserine mark is found at Ser377 and Ser379. A compositionally biased stretch (polar residues) spans 404-426 (MSQSSSQTEIGSLNSKGSLGKDT). Residues Ser428 and Ser493 each carry the phosphoserine modification. 2 disordered regions span residues 475 to 540 (EKVK…HSTQ) and 758 to 802 (SPST…SMSS). A Phosphothreonine modification is found at Thr502. A phosphoserine mark is found at Ser517, Ser526, Ser527, Ser529, and Ser532. Residues 768-802 (SPVVSLTVPSTSPPSSSGLSRDATATPPSSPSMSS) show a composition bias toward low complexity.

This sequence belongs to the PACS family. Associates with AP-1 and AP-3 but not with AP-2 complexes. Interacts with FURIN. Forms a ternary complex with furin and AP-1. Interacts with PKD2 (via acidic region). Interacts with SORL1. Interacts with WDR37.

Its subcellular location is the golgi apparatus. The protein localises to the trans-Golgi network. Functionally, coat protein that is involved in the localization of trans-Golgi network (TGN) membrane proteins that contain acidic cluster sorting motifs. Controls the endosome-to-Golgi trafficking of furin and mannose-6-phosphate receptor by connecting the acidic-cluster-containing cytoplasmic domain of these molecules with the adapter-protein complex-1 (AP-1) of endosomal clathrin-coated membrane pits. Required for normal ER Ca2+ handling in lymphocytes. Together with WDR37, it plays an essential role in lymphocyte development, quiescence and survival. Required for stabilizing peripheral lymphocyte populations. This Rattus norvegicus (Rat) protein is Phosphofurin acidic cluster sorting protein 1 (Pacs1).